The chain runs to 153 residues: Pheromone-binding protein Gp-9 (153 aa).

An N-terminal signal peptide occupies residues 1 to 19; the sequence is MKTFVLHIFIFALVAFASA. 3 disulfide bridges follow: Cys-37-Cys-77, Cys-73-Cys-129, and Cys-118-Cys-138.

This sequence belongs to the PBP/GOBP family. In terms of assembly, homodimer.

The protein localises to the secreted. In terms of biological role, colony queen number, a major feature of social organization, is associated with worker genotype for Gp-9. Colonies are headed by either a single reproductive queen (monogyne form) or multiple queens (polygyne form). Differences in worker Gp-9 genotypes between social forms may cause differences in workers' abilities to recognize queens and regulate their numbers. This is Pheromone-binding protein Gp-9 from Solenopsis richteri (Black imported fire ant).